The sequence spans 208 residues: Ribosome maturation factor RimP (208 aa).

Belongs to the RimP family.

It localises to the cytoplasm. In terms of biological role, required for maturation of 30S ribosomal subunits. This chain is Ribosome maturation factor RimP, found in Bartonella tribocorum (strain CIP 105476 / IBS 506).